The primary structure comprises 261 residues: 3-methyl-2-oxobutanoate hydroxymethyltransferase (261 aa).

Mg(2+)-binding residues include aspartate 44 and aspartate 83. 3-methyl-2-oxobutanoate contacts are provided by residues 44 to 45 (DS), aspartate 83, and lysine 113. Glutamate 115 is a Mg(2+) binding site. Residue glutamate 183 is the Proton acceptor of the active site.

This sequence belongs to the PanB family. Homodecamer; pentamer of dimers. Mg(2+) serves as cofactor.

Its subcellular location is the cytoplasm. It catalyses the reaction 3-methyl-2-oxobutanoate + (6R)-5,10-methylene-5,6,7,8-tetrahydrofolate + H2O = 2-dehydropantoate + (6S)-5,6,7,8-tetrahydrofolate. Its pathway is cofactor biosynthesis; (R)-pantothenate biosynthesis; (R)-pantoate from 3-methyl-2-oxobutanoate: step 1/2. Functionally, catalyzes the reversible reaction in which hydroxymethyl group from 5,10-methylenetetrahydrofolate is transferred onto alpha-ketoisovalerate to form ketopantoate. This Cyanothece sp. (strain PCC 7425 / ATCC 29141) protein is 3-methyl-2-oxobutanoate hydroxymethyltransferase.